The sequence spans 1536 residues: Glycogen debranching enzyme (1536 aa).

Catalysis depends on residues Asp535, His538, and Asp670.

It belongs to the glycogen debranching enzyme family. As to quaternary structure, interacts with IGD1.

It is found in the mitochondrion. The protein resides in the cytoplasm. The catalysed reaction is Transfers a segment of a (1-&gt;4)-alpha-D-glucan to a new position in an acceptor, which may be glucose or a (1-&gt;4)-alpha-D-glucan.. It catalyses the reaction Hydrolysis of (1-&gt;6)-alpha-D-glucosidic branch linkages in glycogen phosphorylase limit dextrin.. With respect to regulation, activity is inhibited by IGD1. Multifunctional enzyme acting as 1,4-alpha-D-glucan:1,4-alpha-D-glucan 4-alpha-D-glycosyltransferase and amylo-1,6-glucosidase in glycogen degradation. The protein is Glycogen debranching enzyme (GDB1) of Saccharomyces cerevisiae (strain ATCC 204508 / S288c) (Baker's yeast).